Consider the following 687-residue polypeptide: Ferric vulnibactin receptor VuuA (687 aa).

Residues 1–37 form the signal peptide; sequence MAALRPARTSVAEKKTFKLHALSAVVMGLCASGQAYA. Positions 63–185 constitute a TBDR plug domain; it reads TIYDTSSSVQ…SAGAIVMKTN (123 aa). The 498-residue stretch at 190-687 folds into the TBDR beta-barrel domain; that stretch reads HFESAVKAGV…MIGASLQLNF (498 aa). The short motif at 670–687 is the TonB C-terminal box element; the sequence is EPLKQQPRMIGASLQLNF.

Belongs to the TonB-dependent receptor family.

The protein localises to the cell outer membrane. In terms of biological role, involved in the uptake of iron in complex with vulnibactin, a catecholate siderophore synthesized by V.vulnificus. Binds and transports ferric vulnibactin across the outer membrane. The energy source is provided by the inner membrane TonB system. The polypeptide is Ferric vulnibactin receptor VuuA (Vibrio vulnificus).